The following is a 914-amino-acid chain: MATIHVDGKEYDVNGADNLLQACLSLGLDIPYFCWHPALGSVGACRQCAVKQYQNADDTRGRLVMSCMTPATDGTFISIDDSEAKAFRESVVEWLMTNHPHDCPVCEEGGNCHLQDMTVMTGHSFRRYRFTKRTHQNQDLGPFISHEMNRCIACYRCVRYYKDYADGTDLGVYGAHDNVYFGRTESGTLESEFSGNLVEVCPTGVFTDKTHSERYNRKWDMQFAPSICQQCSVGCNTSPGERYGELRRIENRYNGSVNHYFMCDRGRFGYGYVNLKDRPRQPQQLRGSDWIHLNADQVMQGAADILRQAKKTIGIGSPRASLESNFALRELVGAENFYTGIAAGEQQRLQLMLKVLREGGIYTPALREIESYDAVLILGEDLTQTGARIALSVRQAVKGKAREMAAAQKVADWQIAAIMNIGQHAKHPLFITNVDNTRMDDIAAWNYRAPVDDQARLGFAIAHALDESAPAVADLDRSLKGKVDIIVQALAGAKKPLIITGSSAGSDAIIEAAANVAKALKNRGSDVGITFVASAANSIGLSMIGGGSLDQALELLTRGEADSAIVMENDLYRHAAKDKVDAALDNVANLIVVDHQRTAIMDKANLILSAASFAESDGTLVNQEGRAQRFFQVYDPTYYDDPKKPESRSIMLESWRWLHSLHSTYTSRHVDWTQLDHVIAACVEALPQLQGIVEAAPDATFRIRGQRLARSPHRYSGRTAMRADISVHEPRQPQDIDTPFSFSMEGNNSPLADRQQIPFAWAPGWNSPQAWNKFQAEVGGSLRFGDPGVRLIEAGEGTLDYFDSIPAAFTATAGNWQIAPYYHLFGSEEMSQRSDVIQQRMPTPYVMVNPADAAALGVNLGTLVEFNCAGQTLRLPVRLSDTLAPGQVGLPLGLPGIPPILVGARVEDLREAVQ.

A 2Fe-2S ferredoxin-type domain is found at 1–83 (MATIHVDGKE…GTFISIDDSE (83 aa)). Positions 34, 45, 48, and 67 each coordinate [2Fe-2S] cluster. In terms of domain architecture, 4Fe-4S His(Cys)3-ligated-type spans 83 to 122 (EAKAFRESVVEWLMTNHPHDCPVCEEGGNCHLQDMTVMTG). Residues His99, Cys103, Cys106, Cys112, Cys151, Cys154, Cys157, Cys201, Cys228, Cys231, Cys235, and Cys263 each coordinate [4Fe-4S] cluster. Residues 221-277 (MQFAPSICQQCSVGCNTSPGERYGELRRIENRYNGSVNHYFMCDRGRFGYGYVNLKD) enclose the 4Fe-4S Mo/W bis-MGD-type domain.

The protein belongs to the complex I 75 kDa subunit family. Composed of 13 different subunits. Subunits NuoCD, E, F, and G constitute the peripheral sector of the complex. It depends on [2Fe-2S] cluster as a cofactor. Requires [4Fe-4S] cluster as cofactor.

The enzyme catalyses a quinone + NADH + 5 H(+)(in) = a quinol + NAD(+) + 4 H(+)(out). Functionally, NDH-1 shuttles electrons from NADH, via FMN and iron-sulfur (Fe-S) centers, to quinones in the respiratory chain. The immediate electron acceptor for the enzyme in this species is believed to be ubiquinone. Couples the redox reaction to proton translocation (for every two electrons transferred, four hydrogen ions are translocated across the cytoplasmic membrane), and thus conserves the redox energy in a proton gradient. The chain is NADH-quinone oxidoreductase subunit G (nuoG) from Yersinia pestis.